A 721-amino-acid polypeptide reads, in one-letter code: Ribonucleoside-diphosphate reductase subunit alpha (721 aa).

Residues Thr-159, 175 to 176 (SC), Gly-204, 384 to 388 (NLCSE), and 589 to 593 (PTGSI) each bind substrate. Cys-176 and Cys-413 are disulfide-bonded. Residue Asn-384 is the Proton acceptor of the active site. Cys-386 functions as the Cysteine radical intermediate in the catalytic mechanism. Residue Glu-388 is the Proton acceptor of the active site.

It belongs to the ribonucleoside diphosphate reductase large chain family. In terms of assembly, tetramer of two alpha and two beta subunits.

The enzyme catalyses a 2'-deoxyribonucleoside 5'-diphosphate + [thioredoxin]-disulfide + H2O = a ribonucleoside 5'-diphosphate + [thioredoxin]-dithiol. Under complex allosteric control mediated by deoxynucleoside triphosphates and ATP binding. The type of nucleotide bound at the specificity site determines substrate preference. It seems probable that ATP makes the enzyme reduce CDP and UDP, dGTP favors ADP reduction and dTTP favors GDP reduction. Provides the precursors necessary for DNA synthesis. Catalyzes the biosynthesis of deoxyribonucleotides from the corresponding ribonucleotides. The protein is Ribonucleoside-diphosphate reductase subunit alpha (nrdE) of Mycoplasma pneumoniae (strain ATCC 29342 / M129 / Subtype 1) (Mycoplasmoides pneumoniae).